A 1118-amino-acid polypeptide reads, in one-letter code: MEIKDQGAQMEPLLPTRNDEEAVVDRGGTRSILKTHFEKEDLEGHRTLFIGVHVPLGGRKSHRRHRHRGHKHRKRDRERDSGLEDGRESPSFDTPSQRVQFILGTEDDDEEHLPHDLFTELDEICWREGEDAEWRETARWLKFEEDVEDGGERWSKPYVATLSLHSLFELRSCILNGTVLLDMHANTIEEIADMVLDQQVSSGQLNEDVRHRVHEALMKQHHHQNQKKLANRIPIVRSFADIGKKQSEPNSMDKNAGQVVSPQSAPACAENKNDVSRENSTVDFSKGLGGQQKGHTSPCGMKQRLDKGPPHQQEREVDLHFMKKIPPGAEASNILVGELEFLDRTVVAFVRLSPAVLLQGLAEVPIPSRFLFILLGPLGKGQQYHEIGRSIATLMTDEVFHDVAYKAKDRNDLVSGIDEFLDQVTVLPPGEWDPSIRIEPPKNVPSQEKRKIPAVPNGTAAHGEAEPHGGHSGPELQRTGRIFGGLILDIKRKAPFFWSDFRDAFSLQCLASFLFLYCACMSPVITFGGLLGEATEGRISAIESLFGASMTGIAYSLFGGQPLTILGSTGPVLVFEKILFKFCKEYGLSYLSLRASIGLWTATLCIILVATDASSLVCYITRFTEEAFASLICIIFIYEALEKLFELSETYPINMHNDLELLTQYSCNCMEPHSPSNDTLKEWRESNLSASDIIWGNLTVSECRSLHGEYVGRACGHGHPYVPDVLFWSVILFFSTVTMSATLKQFKTSRYFPTKVRSIVSDFAVFLTILCMVLIDYAIGIPSPKLQVPSVFKPTRDDRGWFVTPLGPNPWWTIIAAIIPALLCTILIFMDQQITAVIINRKEHKLKKGCGYHLDLLMVAVMLGVCSIMGLPWFVAATVLSITHVNSLKLESECSAPGEQPKFLGIREQRVTGLMIFILMGSSVFMTSILKFIPMPVLYGVFLYMGASSLKGIQLFDRIKLFWMPAKHQPDFIYLRHVPLRKVHLFTVIQMSCLGLLWIIKVSRAAIVFPMMVLALVFVRKLMDFLFTKRELSWLDDLMPESKKKKLEDAEKEEEQSMLAMEDEGTVQLPLEGHYRDDPSVINISDEMSKTAMWGNLLVTADNSKEKESRFPSKSSPS.

2 disordered regions span residues 1 to 23 and 58 to 97; these read MEIKDQGAQMEPLLPTRNDEEAV and GRKSHRRHRHRGHKHRKRDRERDSGLEDGRESPSFDTPSQ. Residues 1-509 are Cytoplasmic-facing; the sequence is MEIKDQGAQM…DFRDAFSLQC (509 aa). Residues 59–76 are compositionally biased toward basic residues; it reads RKSHRRHRHRGHKHRKRD. Positions 77-90 are enriched in basic and acidic residues; that stretch reads RERDSGLEDGRESP. S89 carries the post-translational modification Phosphoserine. Residue T94 is modified to Phosphothreonine. 2 residues coordinate Zn(2+): H221 and H223. Disordered stretches follow at residues 269-310 and 457-476; these read AENK…KGPP and NGTAAHGEAEPHGGHSGPEL. Position 276 is a phosphoserine (S276). A helical transmembrane segment spans residues 510 to 530; that stretch reads LASFLFLYCACMSPVITFGGL. At 531–538 the chain is on the extracellular side; that stretch reads LGEATEGR. The chain crosses the membrane as a helical span at residues 539-559; that stretch reads ISAIESLFGASMTGIAYSLFG. Residues 560–562 are Cytoplasmic-facing; that stretch reads GQP. Residues 563–583 traverse the membrane as a helical segment; the sequence is LTILGSTGPVLVFEKILFKFC. Residues 584-596 are Extracellular-facing; it reads KEYGLSYLSLRAS. Residues 597 to 617 form a helical membrane-spanning segment; sequence IGLWTATLCIILVATDASSLV. Residues 618–626 lie on the Cytoplasmic side of the membrane; that stretch reads CYITRFTEE. Residues 627–647 form a helical membrane-spanning segment; the sequence is AFASLICIIFIYEALEKLFEL. Topologically, residues 648-720 are extracellular; it reads SETYPINMHN…VGRACGHGHP (73 aa). N-linked (GlcNAc...) asparagine glycans are attached at residues N677, N687, and N697. A helical membrane pass occupies residues 721 to 741; sequence YVPDVLFWSVILFFSTVTMSA. At 742–762 the chain is on the cytoplasmic side; that stretch reads TLKQFKTSRYFPTKVRSIVSD. A helical membrane pass occupies residues 763–783; that stretch reads FAVFLTILCMVLIDYAIGIPS. The Extracellular portion of the chain corresponds to 784–809; the sequence is PKLQVPSVFKPTRDDRGWFVTPLGPN. A helical membrane pass occupies residues 810 to 830; that stretch reads PWWTIIAAIIPALLCTILIFM. Over 831 to 855 the chain is Cytoplasmic; it reads DQQITAVIINRKEHKLKKGCGYHLD. The chain crosses the membrane as a helical span at residues 856-876; sequence LLMVAVMLGVCSIMGLPWFVA. Over 877–912 the chain is Extracellular; that stretch reads ATVLSITHVNSLKLESECSAPGEQPKFLGIREQRVT. The helical transmembrane segment at 913–933 threads the bilayer; the sequence is GLMIFILMGSSVFMTSILKFI. The Cytoplasmic segment spans residues 934-935; it reads PM. Residues 936–956 traverse the membrane as a helical segment; the sequence is PVLYGVFLYMGASSLKGIQLF. Topologically, residues 957-998 are extracellular; the sequence is DRIKLFWMPAKHQPDFIYLRHVPLRKVHLFTVIQMSCLGLLW. A helical membrane pass occupies residues 999–1019; the sequence is IIKVSRAAIVFPMMVLALVFV. The Cytoplasmic portion of the chain corresponds to 1020 to 1118; sequence RKLMDFLFTK…SRFPSKSSPS (99 aa). Phosphoserine is present on residues S1057 and S1085.

It belongs to the anion exchanger (TC 2.A.31) family. In terms of processing, N-glycosylated. In terms of tissue distribution, in the brain, detected in cerebral cortex, subcortex, cerebellum, hippocampus and medulla (at protein level). In the cerebrum, expressed at high levels throughout the cortex, at lower levels in striatum and not detectable in the corpus callosum (at protein level). In the cerebellum, detected at high levels in the molecular layer but at very low levels in the granular layer (at protein level). In the central nervous system, detected in neurons in the olfactory bulb, cortex and cerebellum (at protein level). Within the hippocampus, abundantly expressed in CA3 pyramidal cells (at protein level). Strongly expressed in the retina with high levels in bipolar and amacrine cells (at protein level). Expressed in the epithelial cells of the choroid plexus. During embryonic development, expressed in neurons of the central nervous system. Also expressed in the peripheral nervous system and in non-neuronal tissues such as the dura and some epithelia including the acid-secreting epithelium of the stomach and the duodenal epithelium. In the embryonic retina, expression is restricted to the neuronal cell layer and the retinal pigment epithelium. Expressed at high levels in brain and at low levels in the pituitary, testis, kidney and ileum. Also expressed in pancreatic islets.

The protein resides in the basolateral cell membrane. Its subcellular location is the apical cell membrane. It localises to the cell projection. It is found in the dendrite. The protein localises to the axon. The protein resides in the perikaryon. Its subcellular location is the presynapse. It localises to the postsynapse. The enzyme catalyses 2 hydrogencarbonate(out) + chloride(in) + Na(+)(out) = 2 hydrogencarbonate(in) + chloride(out) + Na(+)(in). Zinc-binding negatively regulates its activity. Its function is as follows. Sodium/bicarbonate cotransporter which plays an important role in regulating intracellular pH. Has been shown to act as a sodium/bicarbonate cotransporter in exchange for intracellular chloride. Has also been shown to act as a sodium/biocarbonate cotransporter which is not responsible for net efflux of chloride, with the observed chloride efflux being due to chloride self-exchange. Controls neuronal pH and may contribute to the secretion of cerebrospinal fluid. Acting on presynaptic intracellular pH, it promotes GABA release, reduces the excitability of CA1 pyramidal neurons, and modulates short-term synaptic plasticity. Required in retinal cells to maintain normal pH which is necessary for normal vision. In the kidney, likely to mediate bicarbonate reclamation in the apical membrane of the proximal tubules. Sodium/bicarbonate cotransporter which mediates cotransport of sodium and bicarbonate in association with an efflux of intracellular chloride. The chain is Sodium-driven chloride bicarbonate exchanger from Mus musculus (Mouse).